The sequence spans 549 residues: Chaperonin GroEL (549 aa).

Residues 29–32 (TLGP), Lys-50, 86–90 (DGTTT), Gly-414, 477–479 (NAA), and Asp-493 contribute to the ATP site.

It belongs to the chaperonin (HSP60) family. In terms of assembly, forms a cylinder of 14 subunits composed of two heptameric rings stacked back-to-back. Interacts with the co-chaperonin GroES.

Its subcellular location is the cytoplasm. It carries out the reaction ATP + H2O + a folded polypeptide = ADP + phosphate + an unfolded polypeptide.. Together with its co-chaperonin GroES, plays an essential role in assisting protein folding. The GroEL-GroES system forms a nano-cage that allows encapsulation of the non-native substrate proteins and provides a physical environment optimized to promote and accelerate protein folding. The chain is Chaperonin GroEL from Geotalea uraniireducens (strain Rf4) (Geobacter uraniireducens).